The sequence spans 689 residues: Collagen alpha-2(IX) chain (689 aa).

An N-terminal signal peptide occupies residues 1 to 23 (MAAATASPRSLLVLLQVVVLALA). Positions 26–518 (RGPPGERGPP…QPGRQGVEGR (493 aa)) are disordered. The segment at 27–163 (GPPGERGPPG…PGKPGRPGTI (137 aa)) is triple-helical region 4 (COL4). The segment covering 31-43 (ERGPPGPPGPPGV) has biased composition (pro residues). A compositionally biased stretch (low complexity) spans 44 to 56 (PGSDGIDGDNGPP). Composition is skewed to pro residues over residues 106-127 (LPGPPGLPGPGFAGPPGPPGPV) and 144-157 (PDGPSGPPGPPGKP). The residue at position 160 (proline 160) is a 4-hydroxyproline. The segment at 164–180 (QGLEGSADFLCPTNCPP) is nonhelical region 4 (NC4). The O-linked (Xyl...) (glycosaminoglycan) serine glycan is linked to serine 169. Residues 181–519 (GMKGPPGLQG…PGRQGVEGRD (339 aa)) are triple-helical region 3 (COL3). Position 183 is a 5-hydroxylysine (lysine 183). An O-linked (Gal...) hydroxylysine glycan is attached at lysine 183. The span at 343–352 (GTKGGPGDQG) shows a compositional bias: gly residues. 2 stretches are compositionally biased toward low complexity: residues 353–366 (EPGPQGLPGFSGPP) and 393–413 (RGPVGQPGPQGRQGPKGEQGP). The tract at residues 520 to 549 (ATDQHIVDVALKMLQEQLAEVAVSAKREAL) is nonhelical region 3 (NC3). A triple-helical region 2 (COL2) region spans residues 550–632 (GAVGMMGPPG…PGLPGRPGQA (83 aa)). The segment at 554–663 (MMGPPGPPGP…LPGPVGLPGF (110 aa)) is disordered. Residues 557–566 (PPGPPGPPGY) show a composition bias toward pro residues. Residues 599-611 (KRGEKGDPGEVGR) are compositionally biased toward basic and acidic residues. A nonhelical region 2 (NC2) region spans residues 633-634 (IN). The tract at residues 635 to 664 (GKDGDRGSPGAPGEAGRPGLPGPVGLPGFC) is triple-helical region 1 (COL1). The segment at 665 to 689 (EPAACLGASAYASARLTEPGSIKGP) is nonhelical region 1 (NC1).

This sequence belongs to the fibril-associated collagens with interrupted helices (FACIT) family. Heterotrimer of an alpha 1(IX), an alpha 2(IX) and an alpha 3(IX) chain. The chains are linked to each other by interchain disulfide bonds. Trimers are also cross-linked via hydroxylysines. In terms of processing, covalently linked to the telopeptides of type II collagen by lysine-derived cross-links. Post-translationally, prolines at the third position of the tripeptide repeating unit (G-X-Y) are hydroxylated in some or all of the chains.

Its subcellular location is the secreted. It is found in the extracellular space. The protein localises to the extracellular matrix. Structural component of hyaline cartilage and vitreous of the eye. This is Collagen alpha-2(IX) chain from Homo sapiens (Human).